A 56-amino-acid chain; its full sequence is Large ribosomal subunit protein bL33 (56 aa).

This sequence belongs to the bacterial ribosomal protein bL33 family.

The polypeptide is Large ribosomal subunit protein bL33 (Anaplasma phagocytophilum (strain HZ)).